A 359-amino-acid polypeptide reads, in one-letter code: DNA replication and repair protein RecF (359 aa).

Gly-30 to Thr-37 contributes to the ATP binding site.

It belongs to the RecF family.

Its subcellular location is the cytoplasm. Functionally, the RecF protein is involved in DNA metabolism; it is required for DNA replication and normal SOS inducibility. RecF binds preferentially to single-stranded, linear DNA. It also seems to bind ATP. The protein is DNA replication and repair protein RecF of Aliivibrio salmonicida (strain LFI1238) (Vibrio salmonicida (strain LFI1238)).